We begin with the raw amino-acid sequence, 191 residues long: MGKSCKVVVCGQAAVGKTAILEQLLYGNHVVGSEMIETQEDIYVGSIETDRGVREQVRFYDTRGLRDGLELPKHCFSCTDGYVLVYSTDSKESFRRVELLKKEIDKCKDKKEVTIVVLGNKCDLQEQRRVDHDAAQHWAKGEKVKLWEVSVADRRTLIEPFIYLASKMTQPQSKSAFPLSRKNKGSGSVDG.

The interval M1–G191 is small GTPase-like. Position 11 to 18 (G11 to T18) interacts with GTP. The Effector region motif lies at M35–Y43. Residues D61 to L65 and N120 to D123 contribute to the GTP site. The tract at residues Q170 to G191 is disordered.

Belongs to the small GTPase superfamily. Ras family. KappaB-Ras subfamily.

It is found in the cytoplasm. Its function is as follows. Atypical Ras-like protein that acts as a potent regulator of NF-kappa-B activity by preventing the degradation of NF-kappa-B inhibitor beta (NFKBIB) by most signals, explaining why NFKBIB is more resistant to degradation. In Gallus gallus (Chicken), this protein is NF-kappa-B inhibitor-interacting Ras-like protein 2 (NKIRAS2).